An 81-amino-acid polypeptide reads, in one-letter code: uncharacterized protein (81 aa).

Residues 1–20 (MYSRVLSVAAIVTMALAVQA) constitute a mitochondrion transit peptide. The disordered stretch occupies residues 27-53 (YGNTTNSTGTTNGTNGTNTTTSSTATQ). Over residues 28–53 (GNTTNSTGTTNGTNGTNTTTSSTATQ) the composition is skewed to low complexity. Residues 59-79 (ITNFSSGAFVIAMIAVACSVM) traverse the membrane as a helical segment.

Its subcellular location is the mitochondrion membrane. This is an uncharacterized protein from Schizosaccharomyces pombe (strain 972 / ATCC 24843) (Fission yeast).